A 477-amino-acid chain; its full sequence is Glycogen synthase (477 aa).

Lys15 contacts ADP-alpha-D-glucose.

It belongs to the glycosyltransferase 1 family. Bacterial/plant glycogen synthase subfamily.

It carries out the reaction [(1-&gt;4)-alpha-D-glucosyl](n) + ADP-alpha-D-glucose = [(1-&gt;4)-alpha-D-glucosyl](n+1) + ADP + H(+). The protein operates within glycan biosynthesis; glycogen biosynthesis. In terms of biological role, synthesizes alpha-1,4-glucan chains using ADP-glucose. This chain is Glycogen synthase, found in Shigella boydii serotype 4 (strain Sb227).